Reading from the N-terminus, the 40-residue chain is U4-ctenitoxin-Co1c (40 aa).

Intrachain disulfides connect C3–C20, C10–C26, C19–C40, and C28–C38.

As to expression, expressed by the venom gland.

Its subcellular location is the secreted. In terms of biological role, not toxic to mice by intracerebroventricular injection. This Ctenus ornatus (Brazilian spider) protein is U4-ctenitoxin-Co1c.